Reading from the N-terminus, the 90-residue chain is Small ribosomal subunit protein bS20 (90 aa).

The protein belongs to the bacterial ribosomal protein bS20 family.

Binds directly to 16S ribosomal RNA. This is Small ribosomal subunit protein bS20 from Francisella tularensis subsp. tularensis (strain FSC 198).